The primary structure comprises 508 residues: Glycerol kinase (508 aa).

ADP is bound at residue Thr-14. ATP-binding residues include Thr-14, Thr-15, and Ser-16. Thr-14 is a binding site for sn-glycerol 3-phosphate. Arg-18 is a binding site for ADP. Residues Arg-84, Glu-85, Tyr-134, and Asp-247 each coordinate sn-glycerol 3-phosphate. 5 residues coordinate glycerol: Arg-84, Glu-85, Tyr-134, Asp-247, and Gln-248. Thr-269 and Gly-313 together coordinate ADP. Thr-269, Gly-313, Gln-317, and Gly-416 together coordinate ATP. ADP is bound at residue Gly-416.

This sequence belongs to the FGGY kinase family.

It catalyses the reaction glycerol + ATP = sn-glycerol 3-phosphate + ADP + H(+). The protein operates within polyol metabolism; glycerol degradation via glycerol kinase pathway; sn-glycerol 3-phosphate from glycerol: step 1/1. Its activity is regulated as follows. Inhibited by fructose 1,6-bisphosphate (FBP). Key enzyme in the regulation of glycerol uptake and metabolism. Catalyzes the phosphorylation of glycerol to yield sn-glycerol 3-phosphate. This Mycoplasmoides gallisepticum (strain R(low / passage 15 / clone 2)) (Mycoplasma gallisepticum) protein is Glycerol kinase.